We begin with the raw amino-acid sequence, 195 residues long: Thymidine kinase (195 aa).

ATP is bound by residues serine 9–serine 16 and aspartate 87–glutamine 90. The active-site Proton acceptor is the glutamate 88. Cysteine 145, cysteine 147, cysteine 182, and histidine 185 together coordinate Zn(2+).

This sequence belongs to the thymidine kinase family. Homotetramer.

The protein localises to the cytoplasm. It carries out the reaction thymidine + ATP = dTMP + ADP + H(+). This is Thymidine kinase from Jannaschia sp. (strain CCS1).